A 337-amino-acid chain; its full sequence is tRNA N6-adenosine threonylcarbamoyltransferase (337 aa).

Positions 107 and 111 each coordinate Fe cation. Substrate is bound by residues 129–133 (LISGG), aspartate 162, glycine 175, and asparagine 271. Residue aspartate 299 participates in Fe cation binding.

The protein belongs to the KAE1 / TsaD family. Fe(2+) is required as a cofactor.

Its subcellular location is the cytoplasm. The catalysed reaction is L-threonylcarbamoyladenylate + adenosine(37) in tRNA = N(6)-L-threonylcarbamoyladenosine(37) in tRNA + AMP + H(+). Required for the formation of a threonylcarbamoyl group on adenosine at position 37 (t(6)A37) in tRNAs that read codons beginning with adenine. Is involved in the transfer of the threonylcarbamoyl moiety of threonylcarbamoyl-AMP (TC-AMP) to the N6 group of A37, together with TsaE and TsaB. TsaD likely plays a direct catalytic role in this reaction. The protein is tRNA N6-adenosine threonylcarbamoyltransferase of Sulfurovum sp. (strain NBC37-1).